Here is a 382-residue protein sequence, read N- to C-terminus: Serine/arginine-rich splicing factor SR45a (382 aa).

4 stretches are compositionally biased toward low complexity: residues 30-45 (PMSY…SLSP), 54-68 (VSRS…SVSS), 177-195 (PSYS…SRSY), and 202-219 (SYSP…YSPF). Disordered regions lie at residues 30–76 (PMSY…PGNS) and 150–382 (KARR…SVSP). Positions 288 to 316 (RARDRSCSPYYRGRDRSYSPHYQGRDRSY) are enriched in basic and acidic residues. Residues 329 to 343 (VSGSVSPGGRSMSRS) are compositionally biased toward low complexity. The segment covering 345 to 361 (SPRKGRKESRSKSRRHD) has biased composition (basic residues). Residues 364–382 (SSMCHSRSARSSTSRSVSP) are compositionally biased toward low complexity.

The protein belongs to the splicing factor SR family. SR45 subfamily. In terms of assembly, component of the spliceosome. Homodimer. Interacts with PRP38, SCL28, SR45, RNU1 and U2AF35B. Phosphorylated. As to expression, expressed in leaves, stems and roots.

Its subcellular location is the nucleus speckle. Its function is as follows. Probable splicing factor involved in constitutive and/or alternative splicing events. May bridge the 5' and 3' components of the spliceosome. This Arabidopsis thaliana (Mouse-ear cress) protein is Serine/arginine-rich splicing factor SR45a (SR45A).